Consider the following 188-residue polypeptide: Elongation factor P (188 aa).

The segment at 139–163 (PVTKGQTASSSYKPATLSNGVRTQV) is disordered. A compositionally biased stretch (polar residues) spans 142–160 (KGQTASSSYKPATLSNGVR).

Belongs to the elongation factor P family.

It localises to the cytoplasm. It participates in protein biosynthesis; polypeptide chain elongation. Its function is as follows. Involved in peptide bond synthesis. Stimulates efficient translation and peptide-bond synthesis on native or reconstituted 70S ribosomes in vitro. Probably functions indirectly by altering the affinity of the ribosome for aminoacyl-tRNA, thus increasing their reactivity as acceptors for peptidyl transferase. The sequence is that of Elongation factor P from Methylobacterium nodulans (strain LMG 21967 / CNCM I-2342 / ORS 2060).